The sequence spans 255 residues: tRNA (guanine-N(1)-)-methyltransferase (255 aa).

S-adenosyl-L-methionine is bound by residues Gly117 and 137–142 (IGDYVL).

It belongs to the RNA methyltransferase TrmD family. In terms of assembly, homodimer.

It localises to the cytoplasm. The enzyme catalyses guanosine(37) in tRNA + S-adenosyl-L-methionine = N(1)-methylguanosine(37) in tRNA + S-adenosyl-L-homocysteine + H(+). Specifically methylates guanosine-37 in various tRNAs. The protein is tRNA (guanine-N(1)-)-methyltransferase of Chromobacterium violaceum (strain ATCC 12472 / DSM 30191 / JCM 1249 / CCUG 213 / NBRC 12614 / NCIMB 9131 / NCTC 9757 / MK).